A 235-amino-acid polypeptide reads, in one-letter code: Leucyl/phenylalanyl-tRNA--protein transferase (235 aa).

The protein belongs to the L/F-transferase family.

It localises to the cytoplasm. The enzyme catalyses N-terminal L-lysyl-[protein] + L-leucyl-tRNA(Leu) = N-terminal L-leucyl-L-lysyl-[protein] + tRNA(Leu) + H(+). It catalyses the reaction N-terminal L-arginyl-[protein] + L-leucyl-tRNA(Leu) = N-terminal L-leucyl-L-arginyl-[protein] + tRNA(Leu) + H(+). It carries out the reaction L-phenylalanyl-tRNA(Phe) + an N-terminal L-alpha-aminoacyl-[protein] = an N-terminal L-phenylalanyl-L-alpha-aminoacyl-[protein] + tRNA(Phe). Functions in the N-end rule pathway of protein degradation where it conjugates Leu, Phe and, less efficiently, Met from aminoacyl-tRNAs to the N-termini of proteins containing an N-terminal arginine or lysine. In Methylococcus capsulatus (strain ATCC 33009 / NCIMB 11132 / Bath), this protein is Leucyl/phenylalanyl-tRNA--protein transferase.